The sequence spans 379 residues: Cytochrome b (379 aa).

Helical transmembrane passes span 33–53, 77–98, 113–133, and 178–198; these read FGSL…FLAM, WTIR…FIHV, WNIG…GYVL, and FFAL…IHLL. Heme b-binding residues include histidine 83 and histidine 97. 2 residues coordinate heme b: histidine 182 and histidine 196. Histidine 201 lines the a ubiquinone pocket. Transmembrane regions (helical) follow at residues 226–246, 288–308, 320–340, and 347–367; these read TKDF…TLFY, LGGV…PFLQ, LSQF…WIGG, and FISI…FIMP.

Belongs to the cytochrome b family. As to quaternary structure, the cytochrome bc1 complex contains 11 subunits: 3 respiratory subunits (MT-CYB, CYC1 and UQCRFS1), 2 core proteins (UQCRC1 and UQCRC2) and 6 low-molecular weight proteins (UQCRH/QCR6, UQCRB/QCR7, UQCRQ/QCR8, UQCR10/QCR9, UQCR11/QCR10 and a cleavage product of UQCRFS1). This cytochrome bc1 complex then forms a dimer. Requires heme b as cofactor.

It is found in the mitochondrion inner membrane. In terms of biological role, component of the ubiquinol-cytochrome c reductase complex (complex III or cytochrome b-c1 complex) that is part of the mitochondrial respiratory chain. The b-c1 complex mediates electron transfer from ubiquinol to cytochrome c. Contributes to the generation of a proton gradient across the mitochondrial membrane that is then used for ATP synthesis. The sequence is that of Cytochrome b (MT-CYB) from Lepilemur randrianasoloi (Randrianasoli's sportive lemur).